The primary structure comprises 336 residues: N-acetylornithine carbamoyltransferase (336 aa).

Residues 49–52 (SMRT), tryptophan 77, and arginine 112 contribute to the carbamoyl phosphate site. A N(2)-acetyl-L-ornithine-binding site is contributed by glutamate 144. 148–151 (HPCQ) provides a ligand contact to carbamoyl phosphate. N(2)-acetyl-L-ornithine contacts are provided by lysine 252 and leucine 295. 294–295 (CL) lines the carbamoyl phosphate pocket. An N6-carboxylysine modification is found at lysine 302. Arginine 322 is a carbamoyl phosphate binding site.

This sequence belongs to the aspartate/ornithine carbamoyltransferase superfamily. AOTCase family. Homotrimer.

It localises to the cytoplasm. The catalysed reaction is N(2)-acetyl-L-ornithine + carbamoyl phosphate = N(2)-acetyl-L-citrulline + phosphate + H(+). Its pathway is amino-acid biosynthesis; L-arginine biosynthesis. Carboxylation at Lys-302 increases the catalytic activity of the enzyme. Its function is as follows. Catalyzes the transfer of the carbamoyl group from carbamoyl phosphate to the delta-amino group of N(2)-acetyl-L-ornithine to produce N(2)-acetyl-L-citrulline. This is a step in an alternative arginine biosynthesis pathway. The enzyme has no activity with ornithine. The chain is N-acetylornithine carbamoyltransferase from Xylella fastidiosa (strain Temecula1 / ATCC 700964).